Here is a 614-residue protein sequence, read N- to C-terminus: UvrABC system protein C (614 aa).

The GIY-YIG domain maps to 12 to 89; sequence DKPGVYLFRG…IKEHRPRYNV (78 aa). The region spanning 198 to 233 is the UVR domain; it reads ADLVRGLARKMEAAAANLEFERAAELRDQLRAVEQV.

Belongs to the UvrC family. Interacts with UvrB in an incision complex.

The protein resides in the cytoplasm. In terms of biological role, the UvrABC repair system catalyzes the recognition and processing of DNA lesions. UvrC both incises the 5' and 3' sides of the lesion. The N-terminal half is responsible for the 3' incision and the C-terminal half is responsible for the 5' incision. The sequence is that of UvrABC system protein C from Desulforudis audaxviator (strain MP104C).